The following is a 601-amino-acid chain: Glutathione-regulated potassium-efflux system protein KefB (601 aa).

13 helical membrane passes run 5-25, 29-49, 55-75, 87-107, 115-135, 152-172, 181-201, 207-227, 230-250, 268-288, 291-311, 324-344, and 356-376; these read DLLLAGILFLFAAVVAVPIAA, IGAVLGYLLAGIAIGPWGLGF, EILHFSELGVVFLMFLIGLEL, IFGIGAAQVLLSAVVLAGLLM, AAVVGGIGLAMSSTAMALQLM, VLLFQDLAVIPALAMVPLLAG, LKIGMKVLAFAVMLVGGRYLL, FIAGSGVREVFTAAALLLVLG, LFMDLLGLSMALGTFIAGILL, GLLLGLFFISVGMALNLGVLY, ILWVVMSVVVLVSVKMAVLYG, LPFAGVLSQGGEFAFVLFSSA, and ALLLVTVTLSMMTTPLVMKGI. The RCK N-terminal domain maps to 400 to 519; it reads KPQVIIVGFG…AGVKQFSRET (120 aa).

The protein belongs to the monovalent cation:proton antiporter 2 (CPA2) transporter (TC 2.A.37) family. KefB subfamily. Interacts with the regulatory subunit KefG.

The protein resides in the cell inner membrane. In terms of biological role, pore-forming subunit of a potassium efflux system that confers protection against electrophiles. Catalyzes K(+)/H(+) antiport. This Cronobacter sakazakii (strain ATCC BAA-894) (Enterobacter sakazakii) protein is Glutathione-regulated potassium-efflux system protein KefB.